A 430-amino-acid chain; its full sequence is tRNA(Ile)-lysidine synthase (430 aa).

21–26 (SGGLDS) contributes to the ATP binding site.

It belongs to the tRNA(Ile)-lysidine synthase family.

The protein resides in the cytoplasm. The catalysed reaction is cytidine(34) in tRNA(Ile2) + L-lysine + ATP = lysidine(34) in tRNA(Ile2) + AMP + diphosphate + H(+). Ligates lysine onto the cytidine present at position 34 of the AUA codon-specific tRNA(Ile) that contains the anticodon CAU, in an ATP-dependent manner. Cytidine is converted to lysidine, thus changing the amino acid specificity of the tRNA from methionine to isoleucine. This is tRNA(Ile)-lysidine synthase from Salmonella dublin (strain CT_02021853).